A 134-amino-acid chain; its full sequence is Larval cuticle protein A3A (134 aa).

Repeat 1 spans residues 23–26 (AAPV). The interval 38–80 (DPHPQYSYGYDIQDGLTGDSKNQQETRDGDVVQGSYSLVDPDG) is disordered. Positions 40–106 (HPQYSYGYDI…AVVHREPLVA (67 aa)) constitute a Chitin-binding type R&amp;R domain. The stretch at 111-114 (AAPA) is repeat 2.

Functionally, component of the cuticle of the larva of Tenebrio molitor. In Tenebrio molitor (Yellow mealworm beetle), this protein is Larval cuticle protein A3A.